Reading from the N-terminus, the 254-residue chain is Vitamin B12 import ATP-binding protein BtuD (254 aa).

The region spanning 1–239 (MHINHISVGN…ENLQQVFETP (239 aa)) is the ABC transporter domain. ATP is bound at residue 29 to 36 (GPNGSGKS).

Belongs to the ABC transporter superfamily. Vitamin B12 importer (TC 3.A.1.13.1) family. In terms of assembly, the complex is composed of two ATP-binding proteins (BtuD), two transmembrane proteins (BtuC) and a solute-binding protein (BtuF).

The protein localises to the cell inner membrane. The enzyme catalyses an R-cob(III)alamin(out) + ATP + H2O = an R-cob(III)alamin(in) + ADP + phosphate + H(+). Part of the ABC transporter complex BtuCDF involved in vitamin B12 import. Responsible for energy coupling to the transport system. The chain is Vitamin B12 import ATP-binding protein BtuD from Vibrio vulnificus (strain YJ016).